The sequence spans 100 residues: Urease subunit gamma (100 aa).

It belongs to the urease gamma subunit family. Heterotrimer of UreA (gamma), UreB (beta) and UreC (alpha) subunits. Three heterotrimers associate to form the active enzyme.

The protein localises to the cytoplasm. It catalyses the reaction urea + 2 H2O + H(+) = hydrogencarbonate + 2 NH4(+). It participates in nitrogen metabolism; urea degradation; CO(2) and NH(3) from urea (urease route): step 1/1. In Methylocella silvestris (strain DSM 15510 / CIP 108128 / LMG 27833 / NCIMB 13906 / BL2), this protein is Urease subunit gamma.